The following is a 438-amino-acid chain: Serine hydroxymethyltransferase (438 aa).

Residues Leu-133 and 137–139 (GHL) each bind (6S)-5,6,7,8-tetrahydrofolate. Lys-242 carries the post-translational modification N6-(pyridoxal phosphate)lysine.

The protein belongs to the SHMT family. As to quaternary structure, homodimer. Pyridoxal 5'-phosphate is required as a cofactor.

It localises to the cytoplasm. The catalysed reaction is (6R)-5,10-methylene-5,6,7,8-tetrahydrofolate + glycine + H2O = (6S)-5,6,7,8-tetrahydrofolate + L-serine. It functions in the pathway one-carbon metabolism; tetrahydrofolate interconversion. The protein operates within amino-acid biosynthesis; glycine biosynthesis; glycine from L-serine: step 1/1. In terms of biological role, catalyzes the reversible interconversion of serine and glycine with tetrahydrofolate (THF) serving as the one-carbon carrier. This reaction serves as the major source of one-carbon groups required for the biosynthesis of purines, thymidylate, methionine, and other important biomolecules. Also exhibits THF-independent aldolase activity toward beta-hydroxyamino acids, producing glycine and aldehydes, via a retro-aldol mechanism. In Brucella suis (strain ATCC 23445 / NCTC 10510), this protein is Serine hydroxymethyltransferase.